A 290-amino-acid chain; its full sequence is HTH-type transcriptional activator RhaR (290 aa).

The HTH araC/xylS-type domain maps to 179–277; it reads DLIMSALQQS…GMTPRDYRQR (99 aa). 2 DNA-binding regions (H-T-H motif) span residues 196-217 and 244-267; these read ANFCHKNQLVERSLKQLFRQQT and ISDIAARCGFEDSNYFSAVFTREA.

In terms of assembly, binds DNA as a dimer.

It localises to the cytoplasm. Functionally, activates expression of the rhaSR operon in response to L-rhamnose. The protein is HTH-type transcriptional activator RhaR of Yersinia pseudotuberculosis serotype O:3 (strain YPIII).